Consider the following 79-residue polypeptide: Cell division topological specificity factor (79 aa).

This sequence belongs to the MinE family.

Functionally, prevents the cell division inhibition by proteins MinC and MinD at internal division sites while permitting inhibition at polar sites. This ensures cell division at the proper site by restricting the formation of a division septum at the midpoint of the long axis of the cell. This Nitratiruptor sp. (strain SB155-2) protein is Cell division topological specificity factor.